The sequence spans 306 residues: Glutaminase (306 aa).

Substrate is bound by residues S64, N115, E159, N166, Y190, Y242, and V260.

Belongs to the glutaminase family. Homotetramer.

It catalyses the reaction L-glutamine + H2O = L-glutamate + NH4(+). This is Glutaminase from Aliivibrio fischeri (strain MJ11) (Vibrio fischeri).